The chain runs to 103 residues: Large ribosomal subunit protein bL21 (103 aa).

It belongs to the bacterial ribosomal protein bL21 family. As to quaternary structure, part of the 50S ribosomal subunit. Contacts protein L20.

Functionally, this protein binds to 23S rRNA in the presence of protein L20. The chain is Large ribosomal subunit protein bL21 from Burkholderia ambifaria (strain MC40-6).